Consider the following 632-residue polypeptide: ATP-dependent zinc metalloprotease FtsH (632 aa).

At 1–9 (MKPTNEPKK) the chain is on the cytoplasmic side. Residues 10–30 (PFFQSPIVLAVLGGILLIFFL) form a helical membrane-spanning segment. Residues 31–116 (RSFNSDGSFS…INYSGFSESN (86 aa)) lie on the Periplasmic side of the membrane. The chain crosses the membrane as a helical span at residues 117-137 (FFTDMLGWLMPILVILGLWMF). The Cytoplasmic portion of the chain corresponds to 138-632 (MANRMQKNMG…RLIPLEEQAS (495 aa)). Residue 210 to 217 (GPPGTGKT) coordinates ATP. A Zn(2+)-binding site is contributed by His-434. Glu-435 is a catalytic residue. Zn(2+) is bound by residues His-438 and Asp-511.

It in the central section; belongs to the AAA ATPase family. The protein in the C-terminal section; belongs to the peptidase M41 family. In terms of assembly, homohexamer. Zn(2+) is required as a cofactor.

The protein localises to the cell inner membrane. Its function is as follows. Acts as a processive, ATP-dependent zinc metallopeptidase for both cytoplasmic and membrane proteins. Plays a role in the quality control of integral membrane proteins. The sequence is that of ATP-dependent zinc metalloprotease FtsH from Helicobacter pylori (strain J99 / ATCC 700824) (Campylobacter pylori J99).